We begin with the raw amino-acid sequence, 237 residues long: Urease accessory protein UreF (237 aa).

This sequence belongs to the UreF family. UreD, UreF and UreG form a complex that acts as a GTP-hydrolysis-dependent molecular chaperone, activating the urease apoprotein by helping to assemble the nickel containing metallocenter of UreC. The UreE protein probably delivers the nickel.

It is found in the cytoplasm. Functionally, required for maturation of urease via the functional incorporation of the urease nickel metallocenter. The sequence is that of Urease accessory protein UreF from Streptococcus salivarius (strain 57.I).